Consider the following 417-residue polypeptide: Serine hydroxymethyltransferase (417 aa).

Lysine 54 is subject to N6-acetyllysine. Residues leucine 121 and 125-127 (GHL) contribute to the (6S)-5,6,7,8-tetrahydrofolate site. Lysine 229 is subject to N6-(pyridoxal phosphate)lysine. Residues lysine 250, lysine 285, and lysine 354 each carry the N6-acetyllysine modification. Residue 355-357 (SPF) participates in (6S)-5,6,7,8-tetrahydrofolate binding. An N6-acetyllysine modification is found at lysine 375.

Belongs to the SHMT family. Homodimer. Requires pyridoxal 5'-phosphate as cofactor.

Its subcellular location is the cytoplasm. It catalyses the reaction (6R)-5,10-methylene-5,6,7,8-tetrahydrofolate + glycine + H2O = (6S)-5,6,7,8-tetrahydrofolate + L-serine. The protein operates within one-carbon metabolism; tetrahydrofolate interconversion. Its pathway is amino-acid biosynthesis; glycine biosynthesis; glycine from L-serine: step 1/1. Functionally, catalyzes the reversible interconversion of serine and glycine with tetrahydrofolate (THF) serving as the one-carbon carrier. This reaction serves as the major source of one-carbon groups required for the biosynthesis of purines, thymidylate, methionine, and other important biomolecules. Also exhibits THF-independent aldolase activity toward beta-hydroxyamino acids, producing glycine and aldehydes, via a retro-aldol mechanism. The protein is Serine hydroxymethyltransferase of Escherichia coli O1:K1 / APEC.